Consider the following 521-residue polypeptide: Maturase K (521 aa).

It belongs to the intron maturase 2 family. MatK subfamily.

The protein localises to the plastid. The protein resides in the chloroplast. Usually encoded in the trnK tRNA gene intron. Probably assists in splicing its own and other chloroplast group II introns. This chain is Maturase K, found in Trillium erectum (Beth root).